The chain runs to 782 residues: Coiled-coil alpha-helical rod protein 1 (782 aa).

Composition is skewed to basic and acidic residues over residues 62-74 (ERDV…EPGR) and 208-218 (ETRRAGEAKEL). Disordered regions lie at residues 62–82 (ERDV…WGLE) and 177–218 (EQLS…AKEL). 3 coiled-coil regions span residues 82 to 314 (EGSQ…ELTR), 344 to 437 (LMVQ…NAVS), and 498 to 691 (VADV…QQEG).

It is found in the cytoplasm. The protein resides in the nucleus. Functionally, may be a regulator of keratinocyte proliferation or differentiation. This is Coiled-coil alpha-helical rod protein 1 (CCHCR1) from Pan troglodytes (Chimpanzee).